We begin with the raw amino-acid sequence, 541 residues long: Cytosolic phospholipase A2 gamma (541 aa).

Residues 1-541 enclose the PLA2c domain; that stretch reads MGSSEVSIIP…KDSARSCCLA (541 aa). Ser-82 serves as the catalytic Nucleophile. Positions 260–292 are required for lipid droplet localization; the sequence is LTLKGLWRRAVANAKSIGHLIFARLLRLQESSQ. A Phosphoserine modification is found at Ser-337. Asp-385 serves as the catalytic Proton acceptor. Cys-538 carries the post-translational modification Cysteine methyl ester. Cys-538 carries the S-farnesyl cysteine lipid modification. A propeptide spans 539-541 (removed in mature form); that stretch reads CLA.

In terms of assembly, (Microbial infection) Interacts with HCV non-structural protein 4B/NS4B; this interaction likely initiates the recruitment of replication complexes to lipid droplets. As to expression, highly expressed in heart and skeletal muscle.

It is found in the cell membrane. The protein localises to the endoplasmic reticulum membrane. It localises to the mitochondrion membrane. Its subcellular location is the lipid droplet. The enzyme catalyses a 1,2-diacyl-sn-glycero-3-phosphocholine + H2O = a 1-acyl-sn-glycero-3-phosphocholine + a fatty acid + H(+). It carries out the reaction a 1-O-alkyl-2-acyl-sn-glycero-3-phosphocholine + H2O = a 1-O-alkyl-sn-glycero-3-phosphocholine + a fatty acid + H(+). The catalysed reaction is 1,2-dihexadecanoyl-sn-glycero-3-phosphocholine + H2O = 1-hexadecanoyl-sn-glycero-3-phosphocholine + hexadecanoate + H(+). It catalyses the reaction 1-hexadecanoyl-2-(9Z-octadecenoyl)-sn-glycero-3-phosphocholine + H2O = 1-hexadecanoyl-sn-glycero-3-phosphocholine + (9Z)-octadecenoate + H(+). The enzyme catalyses 1-hexadecanoyl-2-(9Z,12Z-octadecadienoyl)-sn-glycero-3-phosphocholine + H2O = (9Z,12Z)-octadecadienoate + 1-hexadecanoyl-sn-glycero-3-phosphocholine + H(+). It carries out the reaction 1-hexadecanoyl-2-(5Z,8Z,11Z,14Z-eicosatetraenoyl)-sn-glycero-3-phosphocholine + H2O = 1-hexadecanoyl-sn-glycero-3-phosphocholine + (5Z,8Z,11Z,14Z)-eicosatetraenoate + H(+). The catalysed reaction is 1-O-hexadecyl-2-(5Z,8Z,11Z,14Z)-eicosatetraenoyl-sn-glycero-3-phosphocholine + H2O = 1-O-hexadecyl-sn-glycero-3-phosphocholine + (5Z,8Z,11Z,14Z)-eicosatetraenoate + H(+). It catalyses the reaction 1-hexadecanoyl-2-(5Z,8Z,11Z,14Z-eicosatetraenoyl)-sn-glycero-3-phosphocholine + H2O = 2-(5Z,8Z,11Z,14Z)-eicosatetraenoyl-sn-glycero-3-phosphocholine + hexadecanoate + H(+). The enzyme catalyses a 1-acyl-sn-glycero-3-phosphocholine + H2O = sn-glycerol 3-phosphocholine + a fatty acid + H(+). It carries out the reaction 1-hexadecanoyl-sn-glycero-3-phosphocholine + H2O = sn-glycerol 3-phosphocholine + hexadecanoate + H(+). The catalysed reaction is 2 1-hexadecanoyl-sn-glycero-3-phosphocholine = 1,2-dihexadecanoyl-sn-glycero-3-phosphocholine + sn-glycerol 3-phosphocholine. It catalyses the reaction 1-hexadecanoyl-sn-glycero-3-phosphoethanolamine + 1-hexadecanoyl-sn-glycero-3-phosphocholine = 1,2-dihexadecanoyl-sn-glycero-3-phosphoethanolamine + sn-glycerol 3-phosphocholine. The enzyme catalyses 1-hexadecanoyl-sn-glycero-3-phosphoethanolamine + 1-hexadecanoyl-sn-glycero-3-phosphocholine = sn-glycero-3-phosphoethanolamine + 1,2-dihexadecanoyl-sn-glycero-3-phosphocholine. It carries out the reaction 2 1-hexadecanoyl-sn-glycero-3-phosphoethanolamine = 1,2-dihexadecanoyl-sn-glycero-3-phosphoethanolamine + sn-glycero-3-phosphoethanolamine. The catalysed reaction is 1-O-hexadecyl-sn-glycero-3-phosphocholine + 1-hexadecanoyl-sn-glycero-3-phosphocholine = 1-O-hexadecyl-2-hexadecanoyl-sn-glycero-3-phosphocholine + sn-glycerol 3-phosphocholine. It catalyses the reaction a 1-O-(1Z-alkenyl)-sn-glycero-3-phosphoethanolamine + 1-hexadecanoyl-sn-glycero-3-phosphocholine = 1-O-(1Z)-alkenyl-2-hexadecanoyl-sn-glycero-3-phosphoethanolamine + sn-glycerol 3-phosphocholine. The enzyme catalyses 1-O-hexadecyl-sn-glycero-3-phosphocholine + 1-hexadecanoyl-sn-glycero-3-phosphoethanolamine = 1-O-hexadecyl-2-hexadecanoyl-sn-glycero-3-phosphocholine + sn-glycero-3-phosphoethanolamine. It carries out the reaction 1-octadecanoyl-2-(5Z,8Z,11Z,14Z)-eicosatetraenoyl-sn-glycero-3-phosphoethanolamine + 1-hexadecanoyl-sn-glycero-3-phosphocholine = 1-octadecanoyl-sn-glycero-3-phosphoethanolamine + 1-hexadecanoyl-2-(5Z,8Z,11Z,14Z-eicosatetraenoyl)-sn-glycero-3-phosphocholine. The catalysed reaction is 1-octadecanoyl-2-(5Z,8Z,11Z,14Z)-eicosatetraenoyl-sn-glycero-3-phosphoethanolamine + 1-O-hexadecyl-sn-glycero-3-phosphocholine = 1-octadecanoyl-sn-glycero-3-phosphoethanolamine + 1-O-hexadecyl-2-(5Z,8Z,11Z,14Z)-eicosatetraenoyl-sn-glycero-3-phosphocholine. It catalyses the reaction 1-hexadecanoyl-2-(9Z,12Z-octadecadienoyl)-sn-glycero-3-phosphocholine + a 1-O-(1Z-alkenyl)-sn-glycero-3-phosphoethanolamine = 1-O-(1Z-alkenyl)-2-(9Z,12Z-octadecadienoyl)-sn-glycero-3-phosphoethanolamine + 1-hexadecanoyl-sn-glycero-3-phosphocholine. The enzyme catalyses 1-hexadecanoyl-2-(5Z,8Z,11Z,14Z-eicosatetraenoyl)-sn-glycero-3-phosphocholine + a 1-O-(1Z-alkenyl)-sn-glycero-3-phosphoethanolamine = 1-O-(1Z)-alkenyl-2-(5Z,8Z,11Z,14Z)-eicosatetraenoyl-sn-glycero-3-phosphoethanolamine + 1-hexadecanoyl-sn-glycero-3-phosphocholine. With respect to regulation, not regulated by calcium, coenzyme A or ATP. Lysophospholipase activity is inhibited by palmitoyl-CoA. Lysophospholipase and O-acyltransferase activities are inhibited by methylarachidonoylfluorophosphonate. Lysophospholipase activity is inhibited by phosphatidate or lysophosphatidate. O-acyltransferase activity is up-regulated at low concentration (10-20 uM) of phosphatidate or lysophosphatidate, but inhibited at higher concentrations. Functionally, calcium-independent phospholipase, lysophospholipase and O-acyltransferase involved in phospholipid remodeling with implications in endoplasmic reticulum membrane homeostasis and lipid droplet biogenesis. Preferentially hydrolyzes the ester bond of the fatty acyl group attached at the sn-2 position of phospholipids with choline and ethanolamine head groups, producing lysophospholipids that are used in deacylation-reacylation cycles. Transfers the sn-1 fatty acyl from one lysophospholipid molecule to the sn-2 position of another lysophospholipid to form diacyl, alkylacyl and alkenylacyl glycerophospholipids. Cleaves ester bonds but not alkyl or alkenyl ether bonds at sn-1 position of lysophospholipids. Catalyzes sn-2 fatty acyl transfer from phospholipids to the sn-2 position of 1-O-alkyl or 1-O-alkenyl lysophospholipids with lower efficiency. In response to dietary fatty acids, may play a role in the formation of nascent lipid droplets from the endoplasmic reticulum likely by regulating the phospholipid composition of these organelles. Its function is as follows. (Microbial infection) May play a role in replication and assembly of human hepatitis C virus (HCV). In response to HCV infection, promotes remodeling of host endoplasmic reticulum membranes to form organelle-like structures called membranous web, where HCV replication occur. Can further mediate translocation of replication complexes to lipid droplets to enable virion assembly. (Microbial infection) May facilitate human T-lymphotropic virus type 1 (HTLV-1) infection by promoting leukotriene B4 (LTB4) biosynthesis. LTB4 acts as a chemoattractant for HTLV-1-infected CD4-positive T cells and favors cell to cell viral transmission. In Homo sapiens (Human), this protein is Cytosolic phospholipase A2 gamma (PLA2G4C).